We begin with the raw amino-acid sequence, 137 residues long: Large ribosomal subunit protein uL14 (137 aa).

This sequence belongs to the universal ribosomal protein uL14 family. In terms of assembly, component of the large ribosomal subunit. Mature ribosomes consist of a small (40S) and a large (60S) subunit. The 40S subunit contains about 32 different proteins and 1 molecule of RNA (18S). The 60S subunit contains 45 different proteins and 3 molecules of RNA (25S, 5.8S and 5S).

It localises to the cytoplasm. Its function is as follows. Component of the ribosome, a large ribonucleoprotein complex responsible for the synthesis of proteins in the cell. The small ribosomal subunit (SSU) binds messenger RNAs (mRNAs) and translates the encoded message by selecting cognate aminoacyl-transfer RNA (tRNA) molecules. The large subunit (LSU) contains the ribosomal catalytic site termed the peptidyl transferase center (PTC), which catalyzes the formation of peptide bonds, thereby polymerizing the amino acids delivered by tRNAs into a polypeptide chain. The nascent polypeptides leave the ribosome through a tunnel in the LSU and interact with protein factors that function in enzymatic processing, targeting, and the membrane insertion of nascent chains at the exit of the ribosomal tunnel. The protein is Large ribosomal subunit protein uL14 of Candida albicans (strain SC5314 / ATCC MYA-2876) (Yeast).